The chain runs to 302 residues: Serine/threonine-protein phosphatase alpha-3 isoform (302 aa).

Residues Asp-62, His-64, Asp-90, and Asn-122 each coordinate Mn(2+). The active-site Proton donor is His-123. Mn(2+)-binding residues include His-171 and His-246.

It belongs to the PPP phosphatase family. PP-1 subfamily. Interacts with Nop17l. Mn(2+) serves as cofactor.

The catalysed reaction is O-phospho-L-seryl-[protein] + H2O = L-seryl-[protein] + phosphate. The enzyme catalyses O-phospho-L-threonyl-[protein] + H2O = L-threonyl-[protein] + phosphate. The protein is Serine/threonine-protein phosphatase alpha-3 isoform (Pp1-13C) of Drosophila melanogaster (Fruit fly).